The following is a 488-amino-acid chain: Glutamyl-tRNA(Gln) amidotransferase subunit A (488 aa).

Residues lysine 77 and serine 152 each act as charge relay system in the active site. Serine 176 functions as the Acyl-ester intermediate in the catalytic mechanism.

This sequence belongs to the amidase family. GatA subfamily. Heterotrimer of A, B and C subunits.

It carries out the reaction L-glutamyl-tRNA(Gln) + L-glutamine + ATP + H2O = L-glutaminyl-tRNA(Gln) + L-glutamate + ADP + phosphate + H(+). Allows the formation of correctly charged Gln-tRNA(Gln) through the transamidation of misacylated Glu-tRNA(Gln) in organisms which lack glutaminyl-tRNA synthetase. The reaction takes place in the presence of glutamine and ATP through an activated gamma-phospho-Glu-tRNA(Gln). This is Glutamyl-tRNA(Gln) amidotransferase subunit A from Streptococcus pyogenes serotype M4 (strain MGAS10750).